A 324-amino-acid polypeptide reads, in one-letter code: tRNA dimethylallyltransferase (324 aa).

17–24 lines the ATP pocket; that stretch reads GPTASGKT. 19–24 contacts substrate; that stretch reads TASGKT. 4 interaction with substrate tRNA regions span residues 42–45, 166–170, 251–256, and 284–291; these read DSAL, QRIQR, RCVGYR, and KRQITWLR.

This sequence belongs to the IPP transferase family. Monomer. It depends on Mg(2+) as a cofactor.

It catalyses the reaction adenosine(37) in tRNA + dimethylallyl diphosphate = N(6)-dimethylallyladenosine(37) in tRNA + diphosphate. In terms of biological role, catalyzes the transfer of a dimethylallyl group onto the adenine at position 37 in tRNAs that read codons beginning with uridine, leading to the formation of N6-(dimethylallyl)adenosine (i(6)A). In Burkholderia lata (strain ATCC 17760 / DSM 23089 / LMG 22485 / NCIMB 9086 / R18194 / 383), this protein is tRNA dimethylallyltransferase.